The chain runs to 61 residues: Metallothionein-2A (61 aa).

Methionine 1 carries the N-acetylmethionine modification. Residues 1–29 (MDPNCSCAAGGSCTCAGSCKCKDCKCTSC) are beta. A divalent metal cation-binding residues include cysteine 5, cysteine 7, cysteine 13, cysteine 15, cysteine 19, cysteine 21, cysteine 24, cysteine 26, cysteine 29, cysteine 33, cysteine 34, cysteine 36, cysteine 37, cysteine 41, cysteine 44, cysteine 48, cysteine 50, and cysteine 57. Positions 30 to 61 (KKSCCSCCPVGCAKCAQGCICKGASDKCSCCA) are alpha. Serine 58 is modified (phosphoserine). 2 residues coordinate a divalent metal cation: cysteine 59 and cysteine 60.

Belongs to the metallothionein superfamily. Type 1 family. In terms of assembly, interacts with EOLA1.

In terms of biological role, metallothioneins have a high content of cysteine residues that bind various heavy metals; these proteins are transcriptionally regulated by both heavy metals and glucocorticoids. This Sus scrofa (Pig) protein is Metallothionein-2A (MT2A).